The primary structure comprises 581 residues: Kelch-like protein 38 (581 aa).

The BTB domain maps to threonine 34–alanine 101. A BACK domain is found at cysteine 136–alanine 237. Kelch repeat units lie at residues phenylalanine 285–arginine 332, valine 334–asparagine 383, phenylalanine 384–glutamine 431, leucine 433–glutamate 479, glutamine 480–asparagine 521, and leucine 523–cysteine 573.

This chain is Kelch-like protein 38 (Klhl38), found in Mus musculus (Mouse).